Reading from the N-terminus, the 345-residue chain is Beta-2-glycoprotein 1 (345 aa).

The N-terminal stretch at 1–19 (MISPVLILFSSFLCHVAIA) is a signal peptide. Sushi domains lie at 21–81 (RTCP…KCTP), 82–139 (RVCP…VCAP), 140–202 (IICP…ECRE), and 203–262 (VKCP…SCKA). 11 disulfide bridges follow: cysteine 23-cysteine 66, cysteine 51-cysteine 79, cysteine 84-cysteine 124, cysteine 110-cysteine 137, cysteine 142-cysteine 188, cysteine 174-cysteine 200, cysteine 205-cysteine 248, cysteine 234-cysteine 260, cysteine 264-cysteine 315, cysteine 300-cysteine 325, and cysteine 307-cysteine 345. An O-linked (GalNAc...) threonine glycan is attached at threonine 33. Threonine 149 is a glycosylation site (O-linked (GalNAc...) threonine). The N-linked (GlcNAc...) (complex) asparagine glycan is linked to asparagine 162. N-linked (GlcNAc...) asparagine glycans are attached at residues asparagine 183 and asparagine 193. The N-linked (GlcNAc...) asparagine glycan is linked to asparagine 253. The interval 263–345 (SCKVPVKKAT…KTDASDVKPC (83 aa)) is sushi-like.

Post-translationally, N- and O-glycosylated. PubMed:6587378 also reports glycosylation on 'Asn-188' for their allele. Expressed by the liver and secreted in plasma.

The protein localises to the secreted. In terms of biological role, binds to various kinds of negatively charged substances such as heparin, phospholipids, and dextran sulfate. May prevent activation of the intrinsic blood coagulation cascade by binding to phospholipids on the surface of damaged cells. The chain is Beta-2-glycoprotein 1 (APOH) from Homo sapiens (Human).